We begin with the raw amino-acid sequence, 389 residues long: Lipid-A-disaccharide synthase (389 aa).

It belongs to the LpxB family.

It catalyses the reaction a lipid X + a UDP-2-N,3-O-bis[(3R)-3-hydroxyacyl]-alpha-D-glucosamine = a lipid A disaccharide + UDP + H(+). The protein operates within bacterial outer membrane biogenesis; LPS lipid A biosynthesis. Condensation of UDP-2,3-diacylglucosamine and 2,3-diacylglucosamine-1-phosphate to form lipid A disaccharide, a precursor of lipid A, a phosphorylated glycolipid that anchors the lipopolysaccharide to the outer membrane of the cell. The sequence is that of Lipid-A-disaccharide synthase from Burkholderia ambifaria (strain MC40-6).